We begin with the raw amino-acid sequence, 317 residues long: 4-hydroxy-3-methylbut-2-enyl diphosphate reductase (317 aa).

Residue Cys12 coordinates [4Fe-4S] cluster. (2E)-4-hydroxy-3-methylbut-2-enyl diphosphate contacts are provided by His41 and His74. The dimethylallyl diphosphate site is built by His41 and His74. Isopentenyl diphosphate contacts are provided by His41 and His74. A [4Fe-4S] cluster-binding site is contributed by Cys97. Residue His125 coordinates (2E)-4-hydroxy-3-methylbut-2-enyl diphosphate. Residue His125 coordinates dimethylallyl diphosphate. His125 contacts isopentenyl diphosphate. Residue Glu127 is the Proton donor of the active site. (2E)-4-hydroxy-3-methylbut-2-enyl diphosphate is bound at residue Thr168. Cys198 lines the [4Fe-4S] cluster pocket. (2E)-4-hydroxy-3-methylbut-2-enyl diphosphate-binding residues include Ser226, Ser227, Asn228, and Ser270. Dimethylallyl diphosphate is bound by residues Ser226, Ser227, Asn228, and Ser270. Isopentenyl diphosphate is bound by residues Ser226, Ser227, Asn228, and Ser270.

The protein belongs to the IspH family. In terms of assembly, homodimer. [4Fe-4S] cluster serves as cofactor.

The catalysed reaction is isopentenyl diphosphate + 2 oxidized [2Fe-2S]-[ferredoxin] + H2O = (2E)-4-hydroxy-3-methylbut-2-enyl diphosphate + 2 reduced [2Fe-2S]-[ferredoxin] + 2 H(+). It carries out the reaction dimethylallyl diphosphate + 2 oxidized [2Fe-2S]-[ferredoxin] + H2O = (2E)-4-hydroxy-3-methylbut-2-enyl diphosphate + 2 reduced [2Fe-2S]-[ferredoxin] + 2 H(+). It participates in isoprenoid biosynthesis; dimethylallyl diphosphate biosynthesis; dimethylallyl diphosphate from (2E)-4-hydroxy-3-methylbutenyl diphosphate: step 1/1. It functions in the pathway isoprenoid biosynthesis; isopentenyl diphosphate biosynthesis via DXP pathway; isopentenyl diphosphate from 1-deoxy-D-xylulose 5-phosphate: step 6/6. Catalyzes the conversion of 1-hydroxy-2-methyl-2-(E)-butenyl 4-diphosphate (HMBPP) into a mixture of isopentenyl diphosphate (IPP) and dimethylallyl diphosphate (DMAPP). Acts in the terminal step of the DOXP/MEP pathway for isoprenoid precursor biosynthesis. This chain is 4-hydroxy-3-methylbut-2-enyl diphosphate reductase, found in Edwardsiella ictaluri (strain 93-146).